We begin with the raw amino-acid sequence, 137 residues long: Large ribosomal subunit protein uL16 (137 aa).

Belongs to the universal ribosomal protein uL16 family. In terms of assembly, part of the 50S ribosomal subunit.

Functionally, binds 23S rRNA and is also seen to make contacts with the A and possibly P site tRNAs. The chain is Large ribosomal subunit protein uL16 from Cellvibrio japonicus (strain Ueda107) (Pseudomonas fluorescens subsp. cellulosa).